A 354-amino-acid polypeptide reads, in one-letter code: Phosphoribosylformylglycinamidine cyclo-ligase (354 aa).

It belongs to the AIR synthase family.

The protein resides in the cytoplasm. It catalyses the reaction 2-formamido-N(1)-(5-O-phospho-beta-D-ribosyl)acetamidine + ATP = 5-amino-1-(5-phospho-beta-D-ribosyl)imidazole + ADP + phosphate + H(+). Its pathway is purine metabolism; IMP biosynthesis via de novo pathway; 5-amino-1-(5-phospho-D-ribosyl)imidazole from N(2)-formyl-N(1)-(5-phospho-D-ribosyl)glycinamide: step 2/2. The protein is Phosphoribosylformylglycinamidine cyclo-ligase of Synechococcus sp. (strain JA-2-3B'a(2-13)) (Cyanobacteria bacterium Yellowstone B-Prime).